A 354-amino-acid chain; its full sequence is S-adenosylmethionine:tRNA ribosyltransferase-isomerase (354 aa).

It belongs to the QueA family. As to quaternary structure, monomer.

The protein resides in the cytoplasm. The enzyme catalyses 7-aminomethyl-7-carbaguanosine(34) in tRNA + S-adenosyl-L-methionine = epoxyqueuosine(34) in tRNA + adenine + L-methionine + 2 H(+). It participates in tRNA modification; tRNA-queuosine biosynthesis. Functionally, transfers and isomerizes the ribose moiety from AdoMet to the 7-aminomethyl group of 7-deazaguanine (preQ1-tRNA) to give epoxyqueuosine (oQ-tRNA). This chain is S-adenosylmethionine:tRNA ribosyltransferase-isomerase, found in Pseudomonas fluorescens (strain ATCC BAA-477 / NRRL B-23932 / Pf-5).